The primary structure comprises 129 residues: Large-conductance mechanosensitive channel (129 aa).

The next 2 membrane-spanning stretches (helical) occupy residues 10-30 and 70-90; these read FAVK…GAFG and AVML…VIAI.

This sequence belongs to the MscL family. In terms of assembly, homopentamer.

The protein resides in the cell inner membrane. Its function is as follows. Channel that opens in response to stretch forces in the membrane lipid bilayer. May participate in the regulation of osmotic pressure changes within the cell. This Actinobacillus pleuropneumoniae serotype 3 (strain JL03) protein is Large-conductance mechanosensitive channel.